Consider the following 373-residue polypeptide: MLIPFSMKNCFQLLCNLKVPAAGFKNTVKSGLILQSISNDVYHNLAVEDWIHDHMNLEGKPVLFLWRNSPTVVIGRHQNPWQECNLNLMREEGVKLARRRSGGGTVYHDMGNINLTFFTTKKKYDRMENLKLVVRALKAVHPHLDVQATKRFDLLLDGQFKISGTASKIGRNAAYHHCTLLCGTDGTFLSSLLKSPYQGIRSNATASTPALVKNLMEKDPTLTCEVVINAVATEYATSHQIDNHIHLINPTDETVFPGINSKAIELQTWEWIYGKTPKFSVDTSFTVLHEQSHVEIKVFIDVKNGRIEVCNIEAPDHWLPLEICDQLNSSLIGSKFSPIETTVLTSILHRTYPGDDELHSKWNILCEKIKGIM.

Residues 1-25 constitute a mitochondrion transit peptide; that stretch reads MLIPFSMKNCFQLLCNLKVPAAGFK. One can recognise a BPL/LPL catalytic domain in the interval 57–243; that stretch reads LEGKPVLFLW…EYATSHQIDN (187 aa). Residues tyrosine 107, arginine 151, lysine 161, threonine 179, threonine 208, and alanine 210 each contribute to the (R)-lipoyl-5'-AMP site.

Belongs to the LplA family.

The protein localises to the mitochondrion. It carries out the reaction N(6)-[(R)-lipoyl]-L-lysyl-[glycine-cleavage complex H protein] + L-lysyl-[lipoyl-carrier protein] = L-lysyl-[glycine-cleavage complex H protein] + N(6)-[(R)-lipoyl]-L-lysyl-[lipoyl-carrier protein]. It catalyses the reaction (R)-lipoyl-5'-AMP + L-lysyl-[lipoyl-carrier protein] = N(6)-[(R)-lipoyl]-L-lysyl-[lipoyl-carrier protein] + AMP + 2 H(+). It participates in protein modification; protein lipoylation via exogenous pathway; protein N(6)-(lipoyl)lysine from lipoate: step 2/2. Inhibited by lipoyl-AMP analogs including hexanoyl-, octanoyl- and decanoyl-AMP. Lipoyl amidotransferase that catalyzes the transfer of lipoyl moieties from lipoyl-protein H of the glycine cleavage system (lipoyl-GCSH) to E2 subunits of the pyruvate dehydrogenase complex (PDCE2). Unable to catalyze the transfer of octanoyl from octanoyl-GCSH to PDCE2. In vitro, it is also able to catalyze the transfer of the lipoyl group from lipoyl-AMP to the specific lysine residue of lipoyl domains of lipoate-dependent enzymes but this reaction may not be physiologically relevant. In Bos taurus (Bovine), this protein is Lipoyl amidotransferase LIPT1, mitochondrial (LIPT1).